The following is a 303-amino-acid chain: D-alanine--D-alanine ligase (303 aa).

In terms of domain architecture, ATP-grasp spans 99-293 (TYRFLKGTVE…FEELVEIILK (195 aa)). Residue 125–176 (GYPCVVKPRREGSSIGVFVCESDEEFQHALKEDLPRYGSVIVQKYIPGREMT) participates in ATP binding. The Mg(2+) site is built by Asp248, Glu260, and Asn262.

This sequence belongs to the D-alanine--D-alanine ligase family. Mg(2+) serves as cofactor. Requires Mn(2+) as cofactor.

It localises to the cytoplasm. It carries out the reaction 2 D-alanine + ATP = D-alanyl-D-alanine + ADP + phosphate + H(+). It functions in the pathway cell wall biogenesis; peptidoglycan biosynthesis. In terms of biological role, cell wall formation. The protein is D-alanine--D-alanine ligase of Thermotoga maritima (strain ATCC 43589 / DSM 3109 / JCM 10099 / NBRC 100826 / MSB8).